Reading from the N-terminus, the 381-residue chain is MSMELFEVHEGKAKVLVPKAKTIYDSPVFYNPRMAPNRDVVVLLLNVLKPKIVLDALSATGIRGIRFALETPAEEIWMNDINELAYELMKKNVLLNFKGTLKENAKRAIFEGEKTIVINNDDANRLMAEKHRYFHFIDLDPFGSPMEFLDTALRSVKRKGILGVTATDGAPLCGAHPKACLRKYLAVPLRGELCHEVGTRILVGVIARYAAKYDLGMEVLLAYYKDHYFRAFVKLKDGAKKGDETLENLGYVYFDEKTGRFEVEKSFLSTRPNAYGPLWLGPLKNEKVVGEMLELLVSGFEVANYREVLKLLHMLHEELDIPLFYDTHALGKRLKIEPKKLGEIIKELKSMGYEATRTHFSPTGIKTNAPYEVFVEVMRKN.

Residues 6-378 (FEVHEGKAKV…APYEVFVEVM (373 aa)) form the Trm1 methyltransferase domain. The S-adenosyl-L-methionine site is built by R38, R63, D80, D122, and A123.

The protein belongs to the class I-like SAM-binding methyltransferase superfamily. Trm1 family. As to quaternary structure, monomer.

The enzyme catalyses guanosine(26) in tRNA + 2 S-adenosyl-L-methionine = N(2)-dimethylguanosine(26) in tRNA + 2 S-adenosyl-L-homocysteine + 2 H(+). Dimethylates a single guanine residue at position 26 of a number of tRNAs using S-adenosyl-L-methionine as donor of the methyl groups. The chain is tRNA (guanine(26)-N(2))-dimethyltransferase from Pyrococcus furiosus (strain ATCC 43587 / DSM 3638 / JCM 8422 / Vc1).